A 412-amino-acid polypeptide reads, in one-letter code: Multifunctional CCA protein (412 aa).

Positions 8 and 11 each coordinate ATP. Gly-8 and Arg-11 together coordinate CTP. 2 residues coordinate Mg(2+): Asp-21 and Asp-23. ATP contacts are provided by Arg-91, Arg-137, and Arg-140. The CTP site is built by Arg-91, Arg-137, and Arg-140. In terms of domain architecture, HD spans 228 to 329 (TGIHTLMTLS…VKLFDSIDAW (102 aa)).

Belongs to the tRNA nucleotidyltransferase/poly(A) polymerase family. Bacterial CCA-adding enzyme type 1 subfamily. In terms of assembly, monomer. Can also form homodimers and oligomers. Mg(2+) serves as cofactor. Requires Ni(2+) as cofactor.

It catalyses the reaction a tRNA precursor + 2 CTP + ATP = a tRNA with a 3' CCA end + 3 diphosphate. The enzyme catalyses a tRNA with a 3' CCA end + 2 CTP + ATP = a tRNA with a 3' CCACCA end + 3 diphosphate. Functionally, catalyzes the addition and repair of the essential 3'-terminal CCA sequence in tRNAs without using a nucleic acid template. Adds these three nucleotides in the order of C, C, and A to the tRNA nucleotide-73, using CTP and ATP as substrates and producing inorganic pyrophosphate. tRNA 3'-terminal CCA addition is required both for tRNA processing and repair. Also involved in tRNA surveillance by mediating tandem CCA addition to generate a CCACCA at the 3' terminus of unstable tRNAs. While stable tRNAs receive only 3'-terminal CCA, unstable tRNAs are marked with CCACCA and rapidly degraded. The polypeptide is Multifunctional CCA protein (Escherichia coli O139:H28 (strain E24377A / ETEC)).